The chain runs to 335 residues: Leukocyte cell-derived chemotaxin 1 (335 aa).

The chain crosses the membrane as a helical span at residues 45–65 (VVLISGAVLLLLGAIGAFYFW). Residues 104 to 201 (GSGAEEAVEV…LCGDLPIFWL (98 aa)) form the BRICHOS domain. A disulfide bridge connects residues Cys131 and Cys193. The propeptide occupies 211 to 214 (RERR). The interval 221-269 (VTTTTTRRLRSGPQGTPAPGRPNNGTRPSVQEDAEPFNPDNPYHQQEGE) is disordered. A glycan (N-linked (GlcNAc...) asparagine; in variant 223-N-E-224) is linked at Thr223. O-linked (GalNAc...) threonine; partial glycosylation is present at Thr236. N-linked (GlcNAc...) asparagine glycosylation is present at Asn244. Cystine bridges form between Cys283-Cys287, Cys284-Cys324, Cys294-Cys318, and Cys298-Cys314.

Belongs to the chondromodulin-1 family. Post-translationally, after cleavage, the post-translationally modified ChM-I is secreted as a glycoprotein. Two other smaller nonglycosylated chondromodulin forms (9 kDa and 7 kDa) are found either in developing articular cartilage or in chondrocytes. The 9 kDa form could be processed by an extracellular matrix-associated protease as a metalloproteinase and the 7 kDa form could be processed intracellularly. In terms of tissue distribution, nasal and articular cartilage, and fetal epiphysis.

The protein localises to the secreted. The protein resides in the extracellular space. It is found in the extracellular matrix. It localises to the endomembrane system. Bifunctional growth regulator that stimulates the growth of cultured chondrocytes in the presence of basic fibroblast growth factor (FGF) but inhibits the growth of cultured vascular endothelial cells. May contribute to the rapid growth of cartilage and vascular invasion prior to the replacement of cartilage by bone during endochondral bone development. Inhibits in vitro tube formation and mobilization of endothelial cells. Plays a role as antiangiogenic factor in cardiac valves to suppress neovascularization. This Bos taurus (Bovine) protein is Leukocyte cell-derived chemotaxin 1.